We begin with the raw amino-acid sequence, 521 residues long: Manganese transporter pdt1 (521 aa).

Serine 42 is subject to Phosphoserine. Phosphothreonine is present on threonine 43. The next 12 membrane-spanning stretches (helical) occupy residues 71–91 (YCKF…PGNY), 104–124 (KLLF…SLCI), 152–172 (VLAE…TAVA), 179–199 (IPLV…LIAW), 210–230 (IFET…AVVL), 233–253 (VHIG…TVFS), 260–280 (SIGI…SGLV), 325–345 (LFTF…AVFY), 373–393 (LFAV…TIAG), 417–437 (IAII…LNQV), 440–460 (ASQV…VMFT), and 495–515 (IVTW…IVWL).

This sequence belongs to the NRAMP family.

Its subcellular location is the endoplasmic reticulum membrane. Transports manganese ions into the cell. Regulates cell morphogenesis through control of manganese homeostasis. In Schizosaccharomyces pombe (strain 972 / ATCC 24843) (Fission yeast), this protein is Manganese transporter pdt1 (pdt1).